Reading from the N-terminus, the 205-residue chain is Ribonuclease HII (205 aa).

Residues 1–205 form the RNase H type-2 domain; the sequence is MLVCGVDEAG…RPARLIEAGG (205 aa). A divalent metal cation contacts are provided by Asp-7, Glu-8, and Asp-105.

This sequence belongs to the RNase HII family. Mn(2+) serves as cofactor. Requires Mg(2+) as cofactor.

It is found in the cytoplasm. It catalyses the reaction Endonucleolytic cleavage to 5'-phosphomonoester.. Functionally, endonuclease that specifically degrades the RNA of RNA-DNA hybrids. The sequence is that of Ribonuclease HII from Cenarchaeum symbiosum (strain A).